We begin with the raw amino-acid sequence, 359 residues long: Flavonoid 8-O-methyltransferase 1 (359 aa).

D223 lines the S-adenosyl-L-methionine pocket. The active-site Proton acceptor is H261.

This sequence belongs to the class I-like SAM-binding methyltransferase superfamily. Cation-independent O-methyltransferase family. As to expression, expressed in leaves and trichomes, especially in cv. SD and cv. EMX-1, but barely in cv. MC and cv. SW.

The catalysed reaction is an 8-hydroxyflavone + S-adenosyl-L-methionine = an 8-methoxyflavone + S-adenosyl-L-homocysteine + H(+). The enzyme catalyses 4',7,8-trihydroxyflavone + S-adenosyl-L-methionine = 4',7-dihydroxy-8-methoxyflavone + S-adenosyl-L-homocysteine + H(+). It catalyses the reaction 7,8-dihydroxyflavone + S-adenosyl-L-methionine = 7-hydroxy-8-methoxyflavone + S-adenosyl-L-homocysteine + H(+). It carries out the reaction 3',4',7,8-tetrahydroxyflavone + S-adenosyl-L-methionine = 3',4,7-trihydroxy-8-methoxyflavone + S-adenosyl-L-homocysteine + H(+). The protein operates within flavonoid metabolism. With respect to regulation, strongly inhibited by gardenin B (GARD B). Functionally, cation-independent flavonoid 8-O-methyltransferase involved in the biosynthesis of polymethoxylated flavonoids natural products such as nevadensin and salvigenin, aroma compounds which contribute to the flavor of sweet basil, and exhibit pharmacological activities such as anti-allergic, anti-oxidant, antibacterial, anti-proliferative, and anti-inflammatory effects. Catalyzes S-adenosylmethionine-dependent regioselective 8-O-methylation of flavonoids; mediates likely the conversion of pilosin (PIL) to nevadensin (NEV) and of 8-hydroxysalvigenin (8-OH-SALV) to gardenin B (GARD B). Can also use 3',4',7,8-tetrahydroxyflavone as substrate. Accepts other unnatural O-diphenols including 7,8,4'-trihydroxy-flavone and 7-O-methyl-8-hydroxy-flavone, and, with a lower efficiency, 7,8-dihydroxy-flavone, as substrates. In Ocimum basilicum (Sweet basil), this protein is Flavonoid 8-O-methyltransferase 1.